Consider the following 105-residue polypeptide: Small ribosomal subunit protein eS10A (105 aa).

Belongs to the eukaryotic ribosomal protein eS10 family. In terms of assembly, component of the small ribosomal subunit (SSU). Mature yeast ribosomes consist of a small (40S) and a large (60S) subunit. The 40S small subunit contains 1 molecule of ribosomal RNA (18S rRNA) and 33 different proteins (encoded by 57 genes). The large 60S subunit contains 3 rRNA molecules (25S, 5.8S and 5S rRNA) and 46 different proteins (encoded by 81 genes). eS10 interacts with GCN1 (via middle region); this interaction is direct and promotes GCN2 kinase activity. In terms of processing, the N-terminus is not modified.

It is found in the cytoplasm. Its function is as follows. Component of the ribosome, a large ribonucleoprotein complex responsible for the synthesis of proteins in the cell. The small ribosomal subunit (SSU) binds messenger RNAs (mRNAs) and translates the encoded message by selecting cognate aminoacyl-transfer RNA (tRNA) molecules. The large subunit (LSU) contains the ribosomal catalytic site termed the peptidyl transferase center (PTC), which catalyzes the formation of peptide bonds, thereby polymerizing the amino acids delivered by tRNAs into a polypeptide chain. The nascent polypeptides leave the ribosome through a tunnel in the LSU and interact with protein factors that function in enzymatic processing, targeting, and the membrane insertion of nascent chains at the exit of the ribosomal tunnel. eS10 plays a role as a positive regulator of the GCN2 kinase activity by stimulating GCN1-mediated GCN2 activation. The chain is Small ribosomal subunit protein eS10A from Saccharomyces cerevisiae (strain ATCC 204508 / S288c) (Baker's yeast).